The sequence spans 689 residues: FACT complex subunit ssrp1-B (689 aa).

Disordered stretches follow at residues 434 to 565 (DNKS…KRAT) and 592 to 689 (KAGA…GESD). Residues 461–477 (EQDDDSDDESTDEDYDL) are compositionally biased toward acidic residues. Basic and acidic residues-rich tracts occupy residues 478–491 (DKDM…KDSS), 523–532 (IEPKKKESKE), 538–563 (EKKE…EPKR), and 601–628 (SADD…EYKK). Residues 561-627 (PKRATTAYII…RYEAEMKEYK (67 aa)) constitute a DNA-binding region (HMG box). A compositionally biased stretch (polar residues) spans 638–650 (GPSTKKSSDQSPG).

This sequence belongs to the SSRP1 family. As to quaternary structure, component of the FACT complex, a stable heterodimer of hmg-3 and spt-16. The FACT complex may also include hmg-4 instead of hmg-3. In terms of tissue distribution, expressed in the germline.

It localises to the nucleus. The protein resides in the chromosome. Functionally, component of the FACT complex, a general chromatin factor that acts to reorganize nucleosomes. The FACT complex is involved in multiple processes that require DNA as a template such as mRNA elongation, DNA replication and DNA repair. During transcription elongation the FACT complex acts as a histone chaperone that both destabilizes and restores nucleosomal structure. It facilitates the passage of RNA polymerase II and transcription by promoting the dissociation of one histone H2A-H2B dimer from the nucleosome, then subsequently promotes the reestablishment of the nucleosome following the passage of RNA polymerase II. Binds specifically to double-stranded DNA. In embryos, may function redundantly with hmg-4 to promote cell cycle progression and development of the anterior pharynx. In the germline, acts non-redundantly with hmg-4 to play a role in oocyte development. This chain is FACT complex subunit ssrp1-B, found in Caenorhabditis elegans.